We begin with the raw amino-acid sequence, 105 residues long: Large ribosomal subunit protein uL24 (105 aa).

Belongs to the universal ribosomal protein uL24 family. In terms of assembly, part of the 50S ribosomal subunit.

One of two assembly initiator proteins, it binds directly to the 5'-end of the 23S rRNA, where it nucleates assembly of the 50S subunit. In terms of biological role, one of the proteins that surrounds the polypeptide exit tunnel on the outside of the subunit. In Thermotoga petrophila (strain ATCC BAA-488 / DSM 13995 / JCM 10881 / RKU-1), this protein is Large ribosomal subunit protein uL24.